Here is an 832-residue protein sequence, read N- to C-terminus: Protein P (832 aa).

Residues 1-177 (MPLSYQHFRR…FCGSPYSWEQ (177 aa)) are terminal protein domain (TP). A spacer region spans residues 178–335 (ELQHGAESFH…YCLSHIVNLL (158 aa)). The disordered stretch occupies residues 186–229 (FHQQSSGILSRPPVGSSLQSKHSKSRLGLQSQQGHLARRQQGRS). The interval 336–679 (EDWGPCAEHG…YLNLYPVARQ (344 aa)) is polymerase/reverse transcriptase domain (RT). The Reverse transcriptase domain maps to 346–589 (EHHIRTPRTP…YSLNFMGYVI (244 aa)). 3 residues coordinate Mg(2+): Asp-418, Asp-540, and Asp-541.

Belongs to the hepadnaviridae P protein family.

It carries out the reaction DNA(n) + a 2'-deoxyribonucleoside 5'-triphosphate = DNA(n+1) + diphosphate. The catalysed reaction is Endonucleolytic cleavage to 5'-phosphomonoester.. With respect to regulation, activated by host HSP70 and HSP40 in vitro to be able to bind the epsilon loop of the pgRNA. Because deletion of the RNase H region renders the protein partly chaperone-independent, the chaperones may be needed indirectly to relieve occlusion of the RNA-binding site by this domain. Inhibited by several reverse-transcriptase inhibitors: Lamivudine, Adefovir and Entecavir. Its function is as follows. Multifunctional enzyme that converts the viral RNA genome into dsDNA in viral cytoplasmic capsids. This enzyme displays a DNA polymerase activity that can copy either DNA or RNA templates, and a ribonuclease H (RNase H) activity that cleaves the RNA strand of RNA-DNA heteroduplexes in a partially processive 3'- to 5'-endonucleasic mode. Neo-synthesized pregenomic RNA (pgRNA) are encapsidated together with the P protein, and reverse-transcribed inside the nucleocapsid. Initiation of reverse-transcription occurs first by binding the epsilon loop on the pgRNA genome, and is initiated by protein priming, thereby the 5'-end of (-)DNA is covalently linked to P protein. Partial (+)DNA is synthesized from the (-)DNA template and generates the relaxed circular DNA (RC-DNA) genome. After budding and infection, the RC-DNA migrates in the nucleus, and is converted into a plasmid-like covalently closed circular DNA (cccDNA). The activity of P protein does not seem to be necessary for cccDNA generation, and is presumably released from (+)DNA by host nuclear DNA repair machinery. The chain is Protein P from Hepatitis B virus genotype D (isolate Germany/1-91/1991) (HBV-D).